A 335-amino-acid polypeptide reads, in one-letter code: uncharacterized protein (335 aa).

Position 28–35 (28–35) interacts with ATP; it reads GPINSGKT.

It belongs to the archaeal ATPase family.

This is an uncharacterized protein from Pyrococcus abyssi (strain GE5 / Orsay).